We begin with the raw amino-acid sequence, 185 residues long: Photosystem I assembly protein Ycf4 (185 aa).

The next 2 membrane-spanning stretches (helical) occupy residues 21 to 43 and 68 to 90; these read NFFWACILFLGSLGFLSVGISSY and FYGIAGLFISSYLCCTILWNVGS.

This sequence belongs to the Ycf4 family.

Its subcellular location is the plastid. It is found in the chloroplast thylakoid membrane. In terms of biological role, seems to be required for the assembly of the photosystem I complex. This chain is Photosystem I assembly protein Ycf4, found in Aegilops tauschii (Tausch's goatgrass).